The sequence spans 220 residues: 7-cyano-7-deazaguanine synthase (220 aa).

An ATP-binding site is contributed by 10–20; that stretch reads FSGGQDSTTCL. Zn(2+) contacts are provided by Cys186, Cys195, Cys198, and Cys201.

This sequence belongs to the QueC family. As to quaternary structure, homodimer. It depends on Zn(2+) as a cofactor.

The catalysed reaction is 7-carboxy-7-deazaguanine + NH4(+) + ATP = 7-cyano-7-deazaguanine + ADP + phosphate + H2O + H(+). The protein operates within purine metabolism; 7-cyano-7-deazaguanine biosynthesis. Catalyzes the ATP-dependent conversion of 7-carboxy-7-deazaguanine (CDG) to 7-cyano-7-deazaguanine (preQ(0)). The polypeptide is 7-cyano-7-deazaguanine synthase (Bacillus anthracis (strain A0248)).